The following is a 342-amino-acid chain: S-adenosylmethionine:tRNA ribosyltransferase-isomerase (342 aa).

This sequence belongs to the QueA family. Monomer.

Its subcellular location is the cytoplasm. The catalysed reaction is 7-aminomethyl-7-carbaguanosine(34) in tRNA + S-adenosyl-L-methionine = epoxyqueuosine(34) in tRNA + adenine + L-methionine + 2 H(+). It participates in tRNA modification; tRNA-queuosine biosynthesis. Functionally, transfers and isomerizes the ribose moiety from AdoMet to the 7-aminomethyl group of 7-deazaguanine (preQ1-tRNA) to give epoxyqueuosine (oQ-tRNA). The protein is S-adenosylmethionine:tRNA ribosyltransferase-isomerase of Streptococcus pneumoniae (strain ATCC BAA-255 / R6).